The following is a 295-amino-acid chain: uncharacterized protein (295 aa).

The first 19 residues, 1–19 (MRKLLLIITVFFTFNVAQA), serve as a signal peptide directing secretion.

This is an uncharacterized protein from Rickettsia conorii (strain ATCC VR-613 / Malish 7).